Here is a 228-residue protein sequence, read N- to C-terminus: Ribonuclease 3 (228 aa).

The RNase III domain occupies 5-127 (LTALQERLKH…LIGAVYLDAG (123 aa)). Glu40 is a Mg(2+) binding site. Asp44 is an active-site residue. Residues Asp113 and Glu116 each contribute to the Mg(2+) site. Residue Glu116 is part of the active site. Positions 154–224 (DPKTELQEWL…AAAMLIRLKA (71 aa)) constitute a DRBM domain.

The protein belongs to the ribonuclease III family. Homodimer. The cofactor is Mg(2+).

The protein resides in the cytoplasm. The enzyme catalyses Endonucleolytic cleavage to 5'-phosphomonoester.. Digests double-stranded RNA. Involved in the processing of primary rRNA transcript to yield the immediate precursors to the large and small rRNAs (23S and 16S). Processes some mRNAs, and tRNAs when they are encoded in the rRNA operon. Processes pre-crRNA and tracrRNA of type II CRISPR loci if present in the organism. This is Ribonuclease 3 from Variovorax paradoxus (strain S110).